The chain runs to 463 residues: D(5)-like dopamine receptor (463 aa).

The Extracellular portion of the chain corresponds to 1–39 (MENFYNETEPTEPRGGVDPLRVVTAAEDVPAPVGGVSVR). N-linked (GlcNAc...) asparagine glycosylation occurs at Asn-6. The helical transmembrane segment at 40–65 (ALTGCVLCALIVSTLLGNTLVCAAVI) threads the bilayer. The Cytoplasmic segment spans residues 66 to 76 (KFRHLRSKVTN). A helical membrane pass occupies residues 77–103 (AFVVSLAVSDLFVAVLVMPWRAVSEVA). The Extracellular segment spans residues 104–112 (GVWLFGRFC). A disulfide bridge connects residues Cys-112 and Cys-194. The chain crosses the membrane as a helical span at residues 113 to 135 (DTWVAFDIMCSTASILNLCVISM). Over 136 to 154 (DRYWAISNPFRYERRMTRR) the chain is Cytoplasmic. A helical membrane pass occupies residues 155–180 (FAFLMIAVAWTLSVLISFIPVQLNWH). Residues 181–198 (RADNNSSAHEQGDCNASL) are Extracellular-facing. The helical transmembrane segment at 199–223 (NRTYAISSSLISFYIPVLIMVGTYT) threads the bilayer. At 224 to 273 (RIFRIAQTQIRRISSLERAAGQRAQNQSHRASTHDESALKTSFKRETKVL) the chain is on the cytoplasmic side. A helical membrane pass occupies residues 274 to 301 (KTLSVIMGVFVFCWLPFFVLNCVVPFCD). At 302–315 (VDKVGEPPCVSDTT) the chain is on the extracellular side. The helical transmembrane segment at 316–337 (FNIFVWFGWANSSLNPVIYAFN) threads the bilayer. The Cytoplasmic portion of the chain corresponds to 338-463 (ADFRKAFTTI…PGQIQDLGDL (126 aa)).

The protein belongs to the G-protein coupled receptor 1 family.

Its subcellular location is the cell membrane. Receptor for dopamine. The chain is D(5)-like dopamine receptor (dl) from Takifugu rubripes (Japanese pufferfish).